Reading from the N-terminus, the 308-residue chain is 1D-myo-inositol 2-acetamido-2-deoxy-alpha-D-glucopyranoside deacetylase (308 aa).

The Zn(2+) site is built by His13, Asp16, and His147.

The protein belongs to the MshB deacetylase family. It depends on Zn(2+) as a cofactor.

It carries out the reaction 1D-myo-inositol 2-acetamido-2-deoxy-alpha-D-glucopyranoside + H2O = 1D-myo-inositol 2-amino-2-deoxy-alpha-D-glucopyranoside + acetate. Its function is as follows. Catalyzes the deacetylation of 1D-myo-inositol 2-acetamido-2-deoxy-alpha-D-glucopyranoside (GlcNAc-Ins) in the mycothiol biosynthesis pathway. The sequence is that of 1D-myo-inositol 2-acetamido-2-deoxy-alpha-D-glucopyranoside deacetylase from Mycobacterium leprae (strain Br4923).